Consider the following 259-residue polypeptide: Thiazole synthase (259 aa).

Catalysis depends on K99, which acts as the Schiff-base intermediate with DXP. 1-deoxy-D-xylulose 5-phosphate is bound by residues G161, 187–188 (AG), and 209–210 (NT).

Belongs to the ThiG family. Homotetramer. Forms heterodimers with either ThiH or ThiS.

It localises to the cytoplasm. It catalyses the reaction [ThiS sulfur-carrier protein]-C-terminal-Gly-aminoethanethioate + 2-iminoacetate + 1-deoxy-D-xylulose 5-phosphate = [ThiS sulfur-carrier protein]-C-terminal Gly-Gly + 2-[(2R,5Z)-2-carboxy-4-methylthiazol-5(2H)-ylidene]ethyl phosphate + 2 H2O + H(+). It participates in cofactor biosynthesis; thiamine diphosphate biosynthesis. Catalyzes the rearrangement of 1-deoxy-D-xylulose 5-phosphate (DXP) to produce the thiazole phosphate moiety of thiamine. Sulfur is provided by the thiocarboxylate moiety of the carrier protein ThiS. In vitro, sulfur can be provided by H(2)S. The polypeptide is Thiazole synthase (Nautilia profundicola (strain ATCC BAA-1463 / DSM 18972 / AmH)).